Reading from the N-terminus, the 130-residue chain is C-X-C motif chemokine 5 (130 aa).

A signal peptide spans 1-37 (MSFQLRSSARIPSRSCSSFTLLAFLLLFTLPQHRAQA). 2 cysteine pairs are disulfide-bonded: cysteine 50-cysteine 76 and cysteine 52-cysteine 93.

This sequence belongs to the intercrine alpha (chemokine CxC) family. As to quaternary structure, monomer. Homodimer.

Its subcellular location is the secreted. In terms of biological role, may participate in the recruitment of inflammatory cells by injured or infected tissue. This chain is C-X-C motif chemokine 5 (Cxcl5), found in Rattus norvegicus (Rat).